The primary structure comprises 168 residues: MSNQVIILGLDPGTKITGFGVIRIEGHQYVPVDYGCIRPPSHYKLSERYLVICQGVEQLIDQHQPHAVVVETQYVSKNVQSAMKLGMARGVIMIAAKKRGIPIYEYAPSKAKLAVVGTGRASKYQVQGMVQRLLNLSIPPTPEDAADALALAICHAQMPILKQSQYET.

Residues aspartate 11, glutamate 71, and aspartate 144 contribute to the active site. Residues aspartate 11, glutamate 71, and aspartate 144 each coordinate Mg(2+).

The protein belongs to the RuvC family. Homodimer which binds Holliday junction (HJ) DNA. The HJ becomes 2-fold symmetrical on binding to RuvC with unstacked arms; it has a different conformation from HJ DNA in complex with RuvA. In the full resolvosome a probable DNA-RuvA(4)-RuvB(12)-RuvC(2) complex forms which resolves the HJ. Requires Mg(2+) as cofactor.

Its subcellular location is the cytoplasm. The catalysed reaction is Endonucleolytic cleavage at a junction such as a reciprocal single-stranded crossover between two homologous DNA duplexes (Holliday junction).. Functionally, the RuvA-RuvB-RuvC complex processes Holliday junction (HJ) DNA during genetic recombination and DNA repair. Endonuclease that resolves HJ intermediates. Cleaves cruciform DNA by making single-stranded nicks across the HJ at symmetrical positions within the homologous arms, yielding a 5'-phosphate and a 3'-hydroxyl group; requires a central core of homology in the junction. The consensus cleavage sequence is 5'-(A/T)TT(C/G)-3'. Cleavage occurs on the 3'-side of the TT dinucleotide at the point of strand exchange. HJ branch migration catalyzed by RuvA-RuvB allows RuvC to scan DNA until it finds its consensus sequence, where it cleaves and resolves the cruciform DNA. The chain is Crossover junction endodeoxyribonuclease RuvC from Protochlamydia amoebophila (strain UWE25).